We begin with the raw amino-acid sequence, 126 residues long: Spermidine export protein MdtJ (126 aa).

The next 4 helical transmembrane spans lie at 1–21 (MMIY…GTLS), 32–52 (TGHI…ALAV), 55–75 (VALG…ITVF), and 82–102 (ESLS…IMLV). The interval 104 to 126 (SGTRKPKKPNSPNRNSGEHHATA) is disordered.

It belongs to the drug/metabolite transporter (DMT) superfamily. Small multidrug resistance (SMR) (TC 2.A.7.1) family. MdtJ subfamily. As to quaternary structure, forms a complex with MdtI.

It is found in the cell inner membrane. Its function is as follows. Catalyzes the excretion of spermidine. The polypeptide is Spermidine export protein MdtJ (Yersinia enterocolitica serotype O:8 / biotype 1B (strain NCTC 13174 / 8081)).